The chain runs to 339 residues: tRNA N6-adenosine threonylcarbamoyltransferase (339 aa).

Positions 111 and 115 each coordinate Fe cation. Residues 139-143 (LVSGG), aspartate 172, glycine 185, aspartate 189, and asparagine 280 contribute to the substrate site. Aspartate 308 provides a ligand contact to Fe cation.

The protein belongs to the KAE1 / TsaD family. Fe(2+) is required as a cofactor.

It is found in the cytoplasm. The enzyme catalyses L-threonylcarbamoyladenylate + adenosine(37) in tRNA = N(6)-L-threonylcarbamoyladenosine(37) in tRNA + AMP + H(+). Required for the formation of a threonylcarbamoyl group on adenosine at position 37 (t(6)A37) in tRNAs that read codons beginning with adenine. Is involved in the transfer of the threonylcarbamoyl moiety of threonylcarbamoyl-AMP (TC-AMP) to the N6 group of A37, together with TsaE and TsaB. TsaD likely plays a direct catalytic role in this reaction. The chain is tRNA N6-adenosine threonylcarbamoyltransferase from Bacteroides fragilis (strain ATCC 25285 / DSM 2151 / CCUG 4856 / JCM 11019 / LMG 10263 / NCTC 9343 / Onslow / VPI 2553 / EN-2).